The chain runs to 110 residues: Large ribosomal subunit protein uL24 (110 aa).

This sequence belongs to the universal ribosomal protein uL24 family. In terms of assembly, part of the 50S ribosomal subunit.

In terms of biological role, one of two assembly initiator proteins, it binds directly to the 5'-end of the 23S rRNA, where it nucleates assembly of the 50S subunit. One of the proteins that surrounds the polypeptide exit tunnel on the outside of the subunit. This chain is Large ribosomal subunit protein uL24, found in Frankia alni (strain DSM 45986 / CECT 9034 / ACN14a).